The chain runs to 432 residues: N-acylneuraminate cytidylyltransferase (432 aa).

N-acetylmethionine is present on methionine 1. A disordered region spans residues methionine 1–glutamate 38. The short motif at proline 15–arginine 31 is the BC1 motif element. Residues arginine 18–arginine 29 show a composition bias toward basic residues. Arginine 35 and arginine 50 each carry omega-N-methylarginine. Substrate contacts are provided by arginine 50, asparagine 60, arginine 109, serine 118, serine 120, and glutamine 141. The short motif at lysine 198 to aspartate 204 is the BC2 motif element. Residue arginine 199 is part of the active site. The BC3 motif motif lies at lysine 267–lysine 274.

Belongs to the CMP-NeuNAc synthase family. As to quaternary structure, homotetramer; the active enzyme is formed by a dimer of dimers. In terms of tissue distribution, liver.

The protein resides in the nucleus. The catalysed reaction is an N-acylneuraminate + CTP = a CMP-N-acyl-beta-neuraminate + diphosphate. It participates in amino-sugar metabolism; N-acetylneuraminate metabolism. Its function is as follows. Catalyzes the activation of N-acetylneuraminic acid (NeuNAc) to cytidine 5'-monophosphate N-acetylneuraminic acid (CMP-NeuNAc), a substrate required for the addition of sialic acid. Has some activity toward NeuNAc, N-glycolylneuraminic acid (Neu5Gc) or 2-keto-3-deoxy-D-glycero-D-galacto-nononic acid (KDN). The protein is N-acylneuraminate cytidylyltransferase (Cmas) of Rattus norvegicus (Rat).